We begin with the raw amino-acid sequence, 61 residues long: Small ribosomal subunit protein uS14B (61 aa).

Zn(2+) contacts are provided by Cys24, Cys27, Cys40, and Cys43.

It belongs to the universal ribosomal protein uS14 family. Zinc-binding uS14 subfamily. In terms of assembly, part of the 30S ribosomal subunit. Contacts proteins S3 and S10. It depends on Zn(2+) as a cofactor.

In terms of biological role, binds 16S rRNA, required for the assembly of 30S particles and may also be responsible for determining the conformation of the 16S rRNA at the A site. The polypeptide is Small ribosomal subunit protein uS14B (Cutibacterium acnes (strain DSM 16379 / KPA171202) (Propionibacterium acnes)).